Reading from the N-terminus, the 316-residue chain is Homoserine kinase (316 aa).

96–106 (PHGRGLGSSGA) is a binding site for ATP.

This sequence belongs to the GHMP kinase family. Homoserine kinase subfamily.

Its subcellular location is the cytoplasm. The enzyme catalyses L-homoserine + ATP = O-phospho-L-homoserine + ADP + H(+). The protein operates within amino-acid biosynthesis; L-threonine biosynthesis; L-threonine from L-aspartate: step 4/5. Its function is as follows. Catalyzes the ATP-dependent phosphorylation of L-homoserine to L-homoserine phosphate. The polypeptide is Homoserine kinase (Clavibacter michiganensis subsp. michiganensis (strain NCPPB 382)).